A 461-amino-acid polypeptide reads, in one-letter code: Ufm1-specific protease 2 (461 aa).

Catalysis depends on residues Cys-294, Asp-418, and His-420.

Belongs to the peptidase C78 family. As to expression, expressed at high level in brain, kidney, stomach, skeletal muscle, liver, pancreas, spleen and testis.

It localises to the endoplasmic reticulum. It is found in the cytoplasm. The protein resides in the nucleus. Thiol-dependent isopeptidase that specifically cleaves UFM1, a ubiquitin-like modifier protein, from conjugated proteins, such as CD274/PD-L1, CYB5R3, DDRGK1, MRE11, RPL26/uL24, TRIP4 and RPL26/uL24. While it is also able to mediate the processing of UFM1 precursors, a prerequisite for conjugation reactions, UFSP2 mainly acts as a protein deUFMylase that mediates deconjugation of UFM1 from target proteins. Mediates deUFMylation of RPL26/uL24, a critical step to release the UFM1 ribosome E3 ligase (UREL) complex during the recycling of 60S ribosome subunits from the endoplasmic reticulum. Catalyzes deUFMylation of TRIP4, regulating intracellular nuclear receptors transactivation and thereby regulate cell proliferation and differentiation. This chain is Ufm1-specific protease 2, found in Mus musculus (Mouse).